A 27-amino-acid chain; its full sequence is Secretin (27 aa).

Position 27 is a methionine amide (Met27).

This sequence belongs to the glucagon family.

The protein resides in the secreted. Hormone involved in different processes, such as regulation of the pH of the duodenal content, food intake and water homeostasis. Exerts its biological effects by binding to secretin receptor (SCTR), a G-protein coupled receptor expressed in the basolateral domain of several cells. This chain is Secretin, found in Gallus gallus (Chicken).